The following is a 333-amino-acid chain: Alpha-N-acetylgalactosaminide alpha-2,6-sialyltransferase 6 (333 aa).

The span at 1 to 12 (MACSRPPSQCDP) shows a compositional bias: polar residues. A disordered region spans residues 1 to 27 (MACSRPPSQCDPTTLPPGPPAGRWPLP). At 1 to 43 (MACSRPPSQCDPTTLPPGPPAGRWPLPFSRRRREMSSNKEQRS) the chain is on the cytoplasmic side. Residues 44–64 (AVFVILFALITILILYSSNSA) form a helical; Signal-anchor for type II membrane protein membrane-spanning segment. Residues 65 to 333 (NEVFHYGSLR…GITFSHPSWT (269 aa)) are Lumenal-facing. An N-linked (GlcNAc...) asparagine glycan is attached at N98. A disulfide bridge links C108 with C256.

This sequence belongs to the glycosyltransferase 29 family. In terms of tissue distribution, widely expressed, the gene expression is most abundant in colon, brain, liver, and heart.

It is found in the golgi apparatus membrane. The catalysed reaction is a ganglioside GM1b (d18:1(4E)) + CMP-N-acetyl-beta-neuraminate = a ganglioside GD1alpha (d18:1(4E)) + CMP + H(+). It catalyses the reaction a ganglioside GD1a (d18:1(4E)) + CMP-N-acetyl-beta-neuraminate = a ganglioside GT1aalpha (d18:1(4E)) + CMP + H(+). The enzyme catalyses a ganglioside GT1b (d18:1(4E)) + CMP-N-acetyl-beta-neuraminate = a ganglioside GQ1balpha (d18:1(4E)) + CMP + H(+). It carries out the reaction N-acetyl-alpha-neuraminosyl-(2-&gt;3)-beta-D-galactosyl-(1-&gt;3)-N-acetyl-beta-D-glucosaminyl-(1-&gt;3)-beta-D-galactosyl-(1-&gt;4)-beta-D-glucosyl-(1&lt;-&gt;1')-N-acyl-sphing-4-enine + CMP-N-acetyl-beta-neuraminate = N-acetyl-alpha-neuraminosyl-(2-&gt;3)-beta-D-galactosyl-(1-&gt;3)-[N-acetyl-alpha-neuraminosyl-(2-&gt;6)]-N-acetyl-beta-D-glucosaminyl-(1-&gt;3)-beta-D-galactosyl-(1-&gt;4)-beta-D-glucosyl-(1&lt;-&gt;1')-N-acyl-sphing-4-enine + CMP + H(+). The catalysed reaction is a globoside MSGG + CMP-N-acetyl-beta-neuraminate = a globoside DSGG + CMP + H(+). It catalyses the reaction 3-O-[alpha-Neu5Ac-(2-&gt;3)-beta-D-Gal-(1-&gt;3)-alpha-D-GalNAc]-L-Ser-[protein] + CMP-N-acetyl-beta-neuraminate = a 3-O-{alpha-Neu5Ac-(2-&gt;3)-beta-D-Gal-(1-&gt;3)-[alpha-Neu5Ac-(2-&gt;6)]-alpha-D-GalNAc}-L-seryl-[protein] + CMP + H(+). The enzyme catalyses 3-O-[alpha-Neu5Ac-(2-&gt;3)-beta-D-Gal-(1-&gt;3)-alpha-D-GalNAc]-L-Thr-[protein] + CMP-N-acetyl-beta-neuraminate = a 3-O-{alpha-Neu5Ac-(2-&gt;3)-beta-D-Gal-(1-&gt;3)-[alpha-Neu5Ac-(2-&gt;6)]-alpha-D-GalNAc}-L-threonyl-[protein] + CMP + H(+). Functionally, transfers the sialyl group (N-acetyl-alpha-neuraminyl or NeuAc) from CMP-NeuAc onto glycolipids, forming an alpha-2,6-linkage. Produces branched type disialyl structures by transfer of a sialyl group onto the GalNAc or GlcNAc residue inside backbone core chains having a terminal sialic acid with an alpha-2,3-linkage on Gal. ST6GalNAcVI prefers glycolipids to glycoproteins, predominantly catalyzing the biosynthesis of ganglioside GD1alpha from GM1b. Also has activity toward GD1a and GT1b, and can generate DSGG (disialylgalactosylgloboside) from MSGG (monosialylgalactosylgloboside). Besides GMb1, MSGG and other glycolipids, it shows activity towards sialyl Lc4Cer generating disialyl Lc4Cer, which can lead to the synthesis of disialyl Lewis a (Le(a)), suggested to be a cancer-associated antigen. This is Alpha-N-acetylgalactosaminide alpha-2,6-sialyltransferase 6 (St6galnac6) from Mus musculus (Mouse).